Here is a 97-residue protein sequence, read N- to C-terminus: Large ribosomal subunit protein bL27 (97 aa).

The propeptide occupies 1–12 (MLKMNLANLQLF). Residues 14–38 (HKKGGGSTSNGRDSESKRLGAKAAD) form a disordered region.

The protein belongs to the bacterial ribosomal protein bL27 family. The N-terminus is cleaved by ribosomal processing cysteine protease Prp.

The polypeptide is Large ribosomal subunit protein bL27 (Streptococcus mutans serotype c (strain ATCC 700610 / UA159)).